The chain runs to 482 residues: ATP synthase subunit beta (482 aa).

ATP is bound at residue 161 to 168 (GGAGVGKT).

Belongs to the ATPase alpha/beta chains family. In terms of assembly, F-type ATPases have 2 components, CF(1) - the catalytic core - and CF(0) - the membrane proton channel. CF(1) has five subunits: alpha(3), beta(3), gamma(1), delta(1), epsilon(1). CF(0) has four main subunits: a(1), b(1), b'(1) and c(9-12).

It is found in the cellular thylakoid membrane. The enzyme catalyses ATP + H2O + 4 H(+)(in) = ADP + phosphate + 5 H(+)(out). Its function is as follows. Produces ATP from ADP in the presence of a proton gradient across the membrane. The catalytic sites are hosted primarily by the beta subunits. In Microcystis aeruginosa (strain NIES-843 / IAM M-2473), this protein is ATP synthase subunit beta.